The primary structure comprises 104 residues: Large ribosomal subunit protein uL24 (104 aa).

This sequence belongs to the universal ribosomal protein uL24 family. As to quaternary structure, part of the 50S ribosomal subunit.

In terms of biological role, one of two assembly initiator proteins, it binds directly to the 5'-end of the 23S rRNA, where it nucleates assembly of the 50S subunit. Its function is as follows. One of the proteins that surrounds the polypeptide exit tunnel on the outside of the subunit. This is Large ribosomal subunit protein uL24 from Nitrobacter hamburgensis (strain DSM 10229 / NCIMB 13809 / X14).